A 1213-amino-acid chain; its full sequence is DNA-directed RNA polymerase subunit beta' (1213 aa).

Zn(2+) contacts are provided by cysteine 60, cysteine 62, cysteine 75, and cysteine 78. Positions 449, 451, and 453 each coordinate Mg(2+). Residues cysteine 818, cysteine 892, cysteine 899, and cysteine 902 each contribute to the Zn(2+) site.

Belongs to the RNA polymerase beta' chain family. As to quaternary structure, the RNAP catalytic core consists of 2 alpha, 1 beta, 1 beta' and 1 omega subunit. When a sigma factor is associated with the core the holoenzyme is formed, which can initiate transcription. Requires Mg(2+) as cofactor. Zn(2+) serves as cofactor.

The enzyme catalyses RNA(n) + a ribonucleoside 5'-triphosphate = RNA(n+1) + diphosphate. Functionally, DNA-dependent RNA polymerase catalyzes the transcription of DNA into RNA using the four ribonucleoside triphosphates as substrates. In Lactiplantibacillus plantarum (strain ATCC BAA-793 / NCIMB 8826 / WCFS1) (Lactobacillus plantarum), this protein is DNA-directed RNA polymerase subunit beta'.